Here is a 291-residue protein sequence, read N- to C-terminus: 4-diphosphocytidyl-2-C-methyl-D-erythritol kinase (291 aa).

Residue lysine 11 is part of the active site. 97–107 (PVAAGIGGGSS) is a binding site for ATP. Aspartate 139 is a catalytic residue.

The protein belongs to the GHMP kinase family. IspE subfamily.

It carries out the reaction 4-CDP-2-C-methyl-D-erythritol + ATP = 4-CDP-2-C-methyl-D-erythritol 2-phosphate + ADP + H(+). Its pathway is isoprenoid biosynthesis; isopentenyl diphosphate biosynthesis via DXP pathway; isopentenyl diphosphate from 1-deoxy-D-xylulose 5-phosphate: step 3/6. In terms of biological role, catalyzes the phosphorylation of the position 2 hydroxy group of 4-diphosphocytidyl-2C-methyl-D-erythritol. This chain is 4-diphosphocytidyl-2-C-methyl-D-erythritol kinase, found in Methylorubrum extorquens (strain CM4 / NCIMB 13688) (Methylobacterium extorquens).